The primary structure comprises 525 residues: GMP synthase [glutamine-hydrolyzing] (525 aa).

The region spanning 8–207 (KILILDFGSQ…ALDICQCEAN (200 aa)) is the Glutamine amidotransferase type-1 domain. Cys85 functions as the Nucleophile in the catalytic mechanism. Active-site residues include His181 and Glu183. The GMPS ATP-PPase domain occupies 208–400 (WKPSSIIEDA…LGLPYNMLYR (193 aa)). 235–241 (SGGVDSS) is an ATP binding site.

As to quaternary structure, homodimer.

The catalysed reaction is XMP + L-glutamine + ATP + H2O = GMP + L-glutamate + AMP + diphosphate + 2 H(+). It functions in the pathway purine metabolism; GMP biosynthesis; GMP from XMP (L-Gln route): step 1/1. Its function is as follows. Catalyzes the synthesis of GMP from XMP. The sequence is that of GMP synthase [glutamine-hydrolyzing] from Shewanella loihica (strain ATCC BAA-1088 / PV-4).